The sequence spans 120 residues: NAD(P)H-quinone oxidoreductase subunit 3 (120 aa).

3 helical membrane passes run 10–30 (FLGF…TNLI), 64–84 (MFAL…PWAV), and 89–109 (LGLL…IALA).

It belongs to the complex I subunit 3 family. In terms of assembly, NDH-1 can be composed of about 15 different subunits; different subcomplexes with different compositions have been identified which probably have different functions.

Its subcellular location is the cellular thylakoid membrane. The catalysed reaction is a plastoquinone + NADH + (n+1) H(+)(in) = a plastoquinol + NAD(+) + n H(+)(out). The enzyme catalyses a plastoquinone + NADPH + (n+1) H(+)(in) = a plastoquinol + NADP(+) + n H(+)(out). Its function is as follows. NDH-1 shuttles electrons from an unknown electron donor, via FMN and iron-sulfur (Fe-S) centers, to quinones in the respiratory and/or the photosynthetic chain. The immediate electron acceptor for the enzyme in this species is believed to be plastoquinone. Couples the redox reaction to proton translocation, and thus conserves the redox energy in a proton gradient. Cyanobacterial NDH-1 also plays a role in inorganic carbon-concentration. This is NAD(P)H-quinone oxidoreductase subunit 3 from Prochlorococcus marinus (strain MIT 9215).